Consider the following 937-residue polypeptide: MTDYKNTLNLPETGFPMRGDLAKREPDMLKNWYDKNLYQKVREASKGKKTFILHDGPPYANGTLHLGHAVNKILKDIIMKSKTALGFDTPYVPGWDCHGLPIELKVEGLVGKPNEKISAAEFRQACRDYAKEQVEGQKADFIRMGVLGDWDNPYLTMNFETEAEIIRTLGKVIQNGHLYKGSKPVHWCLDCASSLAEAEVEYEDKVSPSIYVRFAAVSAAEVEEKFNALGKGQGALSAVIWTTTPWTLPSNRAIAVNAELEYQLVQLGDERVILAAELVQAVQNALKIEQLEILGSTTGQDLELVRFHHPFYDFSVPIILGDHVTVDGGTGLVHTAPDHGQDDFVVSKKYGLEMAGLVANDGKFISSTPFFAGKGVFEANDLVLEKLKETGALLKLERIKHSYPHCWRHKTPIIFRATPQWFIGMETQDLRIKALSEIKSVRWIPSWGEARIDKMVANRPDWCISRQRTWGVPMTMFVHNETEELHPRTLELLEDIAKRVEKAGIQAWWDLDPAELLGEDAKTYHKVPDTLDVWFDSGSTYASVVEQRPEFNGKSTDMYLEGSDQHRGWFMSSLMLSTATNNKAPYKQVLTHGFTVDEKGRKMSKSLGNVIVPSEVWNKNGADILRLWVASTDYTGEIAVSHKILNSAGDTYRRIRNTARFLLANLNGFDPKNDLVNPEEMISLDRWAVSCALEAQNEIKEAYDNYQFHTVVQRLMRFCSIEMGSFYLDIIKDRQYTTKADSLARRSCQTALWHISEALVRWIAPILSFTADEIWGYLPKLDNRAEFVFTEEFYDGLFGLDESDKLDDTYWQQLLKVRAEVNRVLEQARNDKLIGAGLEAKVTVYASEEIRPLLEQLGNELRFVLITSQVVVKPLSKADVAESELTGLAIKVERADGEKCPRCWHFSTDIGSNKEHSHICGRCIENVEGNGEQRQFA.

The 'HIGH' region motif lies at 58 to 68; it reads PYANGTLHLGH. Glu-561 is an L-isoleucyl-5'-AMP binding site. The 'KMSKS' region motif lies at 602–606; that stretch reads KMSKS. An ATP-binding site is contributed by Lys-605. Residues Cys-900, Cys-903, Cys-920, and Cys-923 each coordinate Zn(2+).

The protein belongs to the class-I aminoacyl-tRNA synthetase family. IleS type 1 subfamily. As to quaternary structure, monomer. Zn(2+) serves as cofactor.

The protein resides in the cytoplasm. It carries out the reaction tRNA(Ile) + L-isoleucine + ATP = L-isoleucyl-tRNA(Ile) + AMP + diphosphate. Its function is as follows. Catalyzes the attachment of isoleucine to tRNA(Ile). As IleRS can inadvertently accommodate and process structurally similar amino acids such as valine, to avoid such errors it has two additional distinct tRNA(Ile)-dependent editing activities. One activity is designated as 'pretransfer' editing and involves the hydrolysis of activated Val-AMP. The other activity is designated 'posttransfer' editing and involves deacylation of mischarged Val-tRNA(Ile). The polypeptide is Isoleucine--tRNA ligase (Histophilus somni (strain 2336) (Haemophilus somnus)).